The sequence spans 100 residues: Large ribosomal subunit protein uL23 (100 aa).

The protein belongs to the universal ribosomal protein uL23 family. Part of the 50S ribosomal subunit. Contacts protein L29, and trigger factor when it is bound to the ribosome.

Functionally, one of the early assembly proteins it binds 23S rRNA. One of the proteins that surrounds the polypeptide exit tunnel on the outside of the ribosome. Forms the main docking site for trigger factor binding to the ribosome. The chain is Large ribosomal subunit protein uL23 from Mycolicibacterium gilvum (strain PYR-GCK) (Mycobacterium gilvum (strain PYR-GCK)).